The chain runs to 519 residues: Probable cytosol aminopeptidase (519 aa).

Lys-283 and Asp-288 together coordinate Mn(2+). The active site involves Lys-295. The Mn(2+) site is built by Asp-306, Asp-365, and Glu-367. Residue Arg-369 is part of the active site.

It belongs to the peptidase M17 family. Mn(2+) serves as cofactor.

Its subcellular location is the cytoplasm. It catalyses the reaction Release of an N-terminal amino acid, Xaa-|-Yaa-, in which Xaa is preferably Leu, but may be other amino acids including Pro although not Arg or Lys, and Yaa may be Pro. Amino acid amides and methyl esters are also readily hydrolyzed, but rates on arylamides are exceedingly low.. The enzyme catalyses Release of an N-terminal amino acid, preferentially leucine, but not glutamic or aspartic acids.. Presumably involved in the processing and regular turnover of intracellular proteins. Catalyzes the removal of unsubstituted N-terminal amino acids from various peptides. The sequence is that of Probable cytosol aminopeptidase from Mycobacterium marinum (strain ATCC BAA-535 / M).